We begin with the raw amino-acid sequence, 580 residues long: MFS-type transporter thnB (580 aa).

The disordered stretch occupies residues methionine 1 to glutamate 33. The span at valine 14–serine 25 shows a compositional bias: polar residues. A run of 7 helical transmembrane segments spans residues leucine 60 to isoleucine 80, phenylalanine 92 to phenylalanine 112, leucine 125 to valine 145, alanine 157 to serine 177, serine 188 to phenylalanine 208, tryptophan 216 to phenylalanine 236, and valine 259 to glycine 279. N-linked (GlcNAc...) asparagine glycosylation is present at asparagine 285. Helical transmembrane passes span serine 286 to tryptophan 306, isoleucine 331 to phenylalanine 351, valine 364 to valine 384, methionine 389 to tyrosine 409, isoleucine 421 to isoleucine 441, serine 457 to phenylalanine 477, and phenylalanine 529 to isoleucine 549.

It belongs to the major facilitator superfamily.

It is found in the membrane. Its function is as follows. MFS-type transporter; part of the gene cluster that produces the tetronate natural products trihazones. This Trichoderma harzianum (Hypocrea lixii) protein is MFS-type transporter thnB.